The primary structure comprises 66 residues: Photosystem II reaction center protein H (66 aa).

A helical transmembrane segment spans residues 29-49 (PIMGLTMVLFLVFLLIILQIY).

This sequence belongs to the PsbH family. In terms of assembly, PSII is composed of 1 copy each of membrane proteins PsbA, PsbB, PsbC, PsbD, PsbE, PsbF, PsbH, PsbI, PsbJ, PsbK, PsbL, PsbM, PsbT, PsbX, PsbY, PsbZ, Psb30/Ycf12, at least 3 peripheral proteins of the oxygen-evolving complex and a large number of cofactors. It forms dimeric complexes.

Its subcellular location is the plastid. It is found in the chloroplast thylakoid membrane. Its function is as follows. One of the components of the core complex of photosystem II (PSII), required for its stability and/or assembly. PSII is a light-driven water:plastoquinone oxidoreductase that uses light energy to abstract electrons from H(2)O, generating O(2) and a proton gradient subsequently used for ATP formation. It consists of a core antenna complex that captures photons, and an electron transfer chain that converts photonic excitation into a charge separation. This Thalassiosira pseudonana (Marine diatom) protein is Photosystem II reaction center protein H.